The primary structure comprises 211 residues: Nucleoside triphosphate pyrophosphatase (211 aa).

Residue Asp-75 is the Proton acceptor of the active site.

It belongs to the Maf family. Requires a divalent metal cation as cofactor.

The protein resides in the cytoplasm. It carries out the reaction a ribonucleoside 5'-triphosphate + H2O = a ribonucleoside 5'-phosphate + diphosphate + H(+). It catalyses the reaction a 2'-deoxyribonucleoside 5'-triphosphate + H2O = a 2'-deoxyribonucleoside 5'-phosphate + diphosphate + H(+). Its function is as follows. Nucleoside triphosphate pyrophosphatase. May have a dual role in cell division arrest and in preventing the incorporation of modified nucleotides into cellular nucleic acids. This Prochlorococcus marinus (strain NATL2A) protein is Nucleoside triphosphate pyrophosphatase.